A 368-amino-acid polypeptide reads, in one-letter code: tRNA(Met) cytidine acetate ligase (368 aa).

ATP contacts are provided by residues 7 to 20 (IAEF…HKYL), G96, N152, and R175.

This sequence belongs to the TmcAL family.

It localises to the cytoplasm. The enzyme catalyses cytidine(34) in elongator tRNA(Met) + acetate + ATP = N(4)-acetylcytidine(34) in elongator tRNA(Met) + AMP + diphosphate. In terms of biological role, catalyzes the formation of N(4)-acetylcytidine (ac(4)C) at the wobble position of elongator tRNA(Met), using acetate and ATP as substrates. First activates an acetate ion to form acetyladenylate (Ac-AMP) and then transfers the acetyl group to tRNA to form ac(4)C34. This is tRNA(Met) cytidine acetate ligase from Streptococcus pyogenes serotype M28 (strain MGAS6180).